The primary structure comprises 709 residues: ATP-dependent zinc metalloprotease YME1 homolog (709 aa).

A disordered region spans residues 152–182 (FTSDTSSTVSSTPSLNHSLQNSMPPSTPTPP). A compositionally biased stretch (low complexity) spans 153-165 (TSDTSSTVSSTPS). A helical transmembrane segment spans residues 217–239 (IFKFIAGLSVASYFVLLGMSIFA). ATP is bound at residue 307-314 (GPPGTGKT). H530 is a binding site for Zn(2+). Residue E531 is part of the active site. Positions 534 and 608 each coordinate Zn(2+).

This sequence in the N-terminal section; belongs to the AAA ATPase family. The protein in the C-terminal section; belongs to the peptidase M41 family. Zn(2+) serves as cofactor.

Its subcellular location is the mitochondrion membrane. In terms of biological role, putative ATP-dependent protease. The chain is ATP-dependent zinc metalloprotease YME1 homolog from Schizosaccharomyces pombe (strain 972 / ATCC 24843) (Fission yeast).